The primary structure comprises 1225 residues: Clustered mitochondria protein homolog (1225 aa).

The segment at 1-22 (MAQTNGEMEHSKESPEQITNGN) is disordered. Positions 281 to 532 (QESNNQKDLL…RVTPLDVAWN (252 aa)) constitute a Clu domain. 2 disordered regions span residues 577–605 (EEAA…EALD) and 846–878 (ANGV…SAAA). 3 TPR repeats span residues 949–982 (AKLY…TERT), 991–1024 (ILSY…WKII), and 1033–1066 (ITTM…CESL). Polar residues predominate over residues 1153–1184 (RTTLGTQIQPQVGQSTADVSAPSQASNSSIDS). The tract at residues 1153 to 1225 (RTTLGTQIQP…KLRGSKKSSA (73 aa)) is disordered.

This sequence belongs to the CLU family. As to quaternary structure, may associate with the eukaryotic translation initiation factor 3 (eIF-3) complex.

It is found in the cytoplasm. In terms of biological role, mRNA-binding protein involved in proper cytoplasmic distribution of mitochondria. The protein is Clustered mitochondria protein homolog of Emericella nidulans (strain FGSC A4 / ATCC 38163 / CBS 112.46 / NRRL 194 / M139) (Aspergillus nidulans).